Reading from the N-terminus, the 200-residue chain is Probable molybdenum cofactor guanylyltransferase (200 aa).

Residues 8–10 (LAG), Lys-20, Asp-66, and Asp-97 each bind GTP. Mg(2+) is bound at residue Asp-97.

This sequence belongs to the MobA family. The cofactor is Mg(2+).

The protein resides in the cytoplasm. The catalysed reaction is Mo-molybdopterin + GTP + H(+) = Mo-molybdopterin guanine dinucleotide + diphosphate. Functionally, transfers a GMP moiety from GTP to Mo-molybdopterin (Mo-MPT) cofactor (Moco or molybdenum cofactor) to form Mo-molybdopterin guanine dinucleotide (Mo-MGD) cofactor. This is Probable molybdenum cofactor guanylyltransferase from Bacillus velezensis (strain DSM 23117 / BGSC 10A6 / LMG 26770 / FZB42) (Bacillus amyloliquefaciens subsp. plantarum).